A 226-amino-acid chain; its full sequence is Lipoprotein-releasing system ATP-binding protein LolD (226 aa).

An ABC transporter domain is found at 5–226; sequence LKATNINKIY…LLRNGHWENY (222 aa). 41-48 provides a ligand contact to ATP; it reads GTSGSGKS.

The protein belongs to the ABC transporter superfamily. Lipoprotein translocase (TC 3.A.1.125) family. The complex is composed of two ATP-binding proteins (LolD) and two transmembrane proteins (LolC and LolE).

The protein resides in the cell inner membrane. Part of the ABC transporter complex LolCDE involved in the translocation of mature outer membrane-directed lipoproteins, from the inner membrane to the periplasmic chaperone, LolA. Responsible for the formation of the LolA-lipoprotein complex in an ATP-dependent manner. The polypeptide is Lipoprotein-releasing system ATP-binding protein LolD (Psychrobacter arcticus (strain DSM 17307 / VKM B-2377 / 273-4)).